Reading from the N-terminus, the 1430-residue chain is Bromodomain-containing protein homolog (1430 aa).

The segment at 23-49 (FACPVRGCDRSYKTIMGLQYHLMKYDH) adopts a C2H2-type zinc-finger fold. The interval 51 to 111 (NPQPLTPVLT…AGGGSASGVS (61 aa)) is disordered. Residues 62 to 81 (SRKKARSRSGGHHSTPRPHK) show a composition bias toward basic residues. Residues 283-333 (DAVCCICLDGECQNTNVILFCDMCNLAVHQDCYGVPYIPEGQWLCRRCLQS) form a PHD-type 1 zinc finger. Zn(2+) contacts are provided by cysteine 286, cysteine 289, cysteine 303, cysteine 306, histidine 311, cysteine 314, cysteine 327, and cysteine 330. The C2HC pre-PHD-type zinc-finger motif lies at 337–370 (PVNCVLCPNAGGAFKQTDHGQWAHVVCALWIPEV). The PHD-type 2 zinc-finger motif lies at 394–457 (LTCYVCKEKG…QKFAYCHAHT (64 aa)). The 105-residue stretch at 611–715 (LQLNPLEAAL…DQAAPLFVQV (105 aa)) folds into the Bromo domain. Basic residues predominate over residues 796–805 (KARFAARHSS). Disordered regions lie at residues 796 to 887 (KARF…SSPV), 901 to 942 (AQAA…TTAA), 1012 to 1054 (ANLP…QALP), and 1076 to 1301 (QRDV…GQKP). The segment covering 842–857 (HDDDDEEEDSDEDSMG) has biased composition (acidic residues). The segment covering 865–887 (LLNSTQTPPCSPIKSLNNSSSPV) has biased composition (polar residues). Low complexity-rich tracts occupy residues 922-942 (NSQS…TTAA), 1034-1043 (SSSMSPKKSP), and 1085-1107 (APSQ…SCSD). Residues 1108-1120 (FDSDEASEGDADG) are compositionally biased toward acidic residues. Residues 1121 to 1137 (DPDRDGGRSRSEERDST) show a composition bias toward basic and acidic residues. 2 stretches are compositionally biased toward polar residues: residues 1151 to 1165 (ASLN…NMAI) and 1265 to 1278 (NTTA…TNNN). The segment covering 1281-1293 (KHSEDSASSERHN) has biased composition (basic and acidic residues). The PWWP domain occupies 1305-1378 (PLQLVWAKCR…TWQWLPANKL (74 aa)).

In terms of assembly, component of the Enok complex composed of at least Br140, enok, Eaf6 and Ing5. As part of the Enok complex, interacts with elg1 and the Elg1 RFC-like complex.

It is found in the nucleus. Its function is as follows. Scaffold subunit of the histone acetyltransferase (HAT) Enok complex which has histone H3 acetyltransferase activity. As part of the Enok complex, associates with the Elg1 RFC-like complex and down-regulates its PCNA-unloading function to promote the G1/S transition. May also play a role in maintaining the protein levels and stability of enok. The chain is Bromodomain-containing protein homolog from Drosophila melanogaster (Fruit fly).